Reading from the N-terminus, the 302-residue chain is Lipoyl synthase (302 aa).

[4Fe-4S] cluster is bound by residues C54, C59, C65, C80, C84, C87, and S291. In terms of domain architecture, Radical SAM core spans 66–280 (WSRKTATYML…RIYGKSIGFK (215 aa)).

It belongs to the radical SAM superfamily. Lipoyl synthase family. Requires [4Fe-4S] cluster as cofactor.

Its subcellular location is the cytoplasm. It carries out the reaction [[Fe-S] cluster scaffold protein carrying a second [4Fe-4S](2+) cluster] + N(6)-octanoyl-L-lysyl-[protein] + 2 oxidized [2Fe-2S]-[ferredoxin] + 2 S-adenosyl-L-methionine + 4 H(+) = [[Fe-S] cluster scaffold protein] + N(6)-[(R)-dihydrolipoyl]-L-lysyl-[protein] + 4 Fe(3+) + 2 hydrogen sulfide + 2 5'-deoxyadenosine + 2 L-methionine + 2 reduced [2Fe-2S]-[ferredoxin]. It functions in the pathway protein modification; protein lipoylation via endogenous pathway; protein N(6)-(lipoyl)lysine from octanoyl-[acyl-carrier-protein]: step 2/2. Functionally, catalyzes the radical-mediated insertion of two sulfur atoms into the C-6 and C-8 positions of the octanoyl moiety bound to the lipoyl domains of lipoate-dependent enzymes, thereby converting the octanoylated domains into lipoylated derivatives. The polypeptide is Lipoyl synthase (Leptospira borgpetersenii serovar Hardjo-bovis (strain JB197)).